Consider the following 225-residue polypeptide: Ribose-5-phosphate isomerase A (225 aa).

Substrate is bound by residues T33–T36, D86–D89, and K99–G102. Catalysis depends on E108, which acts as the Proton acceptor. K126 serves as a coordination point for substrate.

Belongs to the ribose 5-phosphate isomerase family. As to quaternary structure, homodimer.

The enzyme catalyses aldehydo-D-ribose 5-phosphate = D-ribulose 5-phosphate. It functions in the pathway carbohydrate degradation; pentose phosphate pathway; D-ribose 5-phosphate from D-ribulose 5-phosphate (non-oxidative stage): step 1/1. Functionally, catalyzes the reversible conversion of ribose-5-phosphate to ribulose 5-phosphate. In Bordetella petrii (strain ATCC BAA-461 / DSM 12804 / CCUG 43448), this protein is Ribose-5-phosphate isomerase A.